The chain runs to 435 residues: Monodehydroascorbate reductase 3, cytosolic (435 aa).

FAD is bound by residues 14–17, glutamate 41, arginine 48, lysine 53, isoleucine 96, and 147–148; these read GGVA and RE. NAD(+) is bound by residues 172 to 178, glutamate 196, arginine 202, and glycine 261; that span reads GGYIGLE. 174–178 provides a ligand contact to NADP(+); the sequence is YIGLE. 2 residues coordinate NADP(+): arginine 202 and glycine 261. Aspartate 298 is an FAD binding site. 314–315 contacts NAD(+); sequence EH. 314–315 lines the NADP(+) pocket; that stretch reads EH. Valine 316 contacts FAD. Arginine 320 contacts L-ascorbate. Tyrosine 349 contacts FAD. Tyrosine 349 lines the NAD(+) pocket. Residue tyrosine 349 participates in NADP(+) binding. Arginine 351 is a binding site for L-ascorbate.

It belongs to the FAD-dependent oxidoreductase family. FAD is required as a cofactor.

Its subcellular location is the cytoplasm. It catalyses the reaction 2 monodehydro-L-ascorbate radical + NADH + H(+) = 2 L-ascorbate + NAD(+). Catalyzes the conversion of monodehydroascorbate to ascorbate, oxidizing NADH in the process. Ascorbate is a major antioxidant against reactive oxygen species (ROS) and nitric oxide (NO). Can use NADPH as electron donor, but possesses lower activity compared to NADH as electron donor. This Oryza sativa subsp. japonica (Rice) protein is Monodehydroascorbate reductase 3, cytosolic.